The sequence spans 310 residues: Aspartate carbamoyltransferase catalytic subunit (310 aa).

Carbamoyl phosphate contacts are provided by R55 and T56. K85 contributes to the L-aspartate binding site. The carbamoyl phosphate site is built by R106, H135, and Q138. R168 and R230 together coordinate L-aspartate. Residues L268 and P269 each coordinate carbamoyl phosphate.

This sequence belongs to the aspartate/ornithine carbamoyltransferase superfamily. ATCase family. Heterododecamer (2C3:3R2) of six catalytic PyrB chains organized as two trimers (C3), and six regulatory PyrI chains organized as three dimers (R2).

The enzyme catalyses carbamoyl phosphate + L-aspartate = N-carbamoyl-L-aspartate + phosphate + H(+). It participates in pyrimidine metabolism; UMP biosynthesis via de novo pathway; (S)-dihydroorotate from bicarbonate: step 2/3. Functionally, catalyzes the condensation of carbamoyl phosphate and aspartate to form carbamoyl aspartate and inorganic phosphate, the committed step in the de novo pyrimidine nucleotide biosynthesis pathway. The chain is Aspartate carbamoyltransferase catalytic subunit from Buchnera aphidicola subsp. Acyrthosiphon pisum (strain APS) (Acyrthosiphon pisum symbiotic bacterium).